The following is a 141-amino-acid chain: Elongation factor G, chloroplastic (141 aa).

Positions 12 to 141 (KDYRNIGIMA…VPRICFVNKM (130 aa)) constitute a tr-type G domain. GTP is bound by residues 21-28 (AHIDAGKT) and 85-89 (DTPGH).

It belongs to the TRAFAC class translation factor GTPase superfamily. Classic translation factor GTPase family. EF-G/EF-2 subfamily.

It is found in the plastid. Its subcellular location is the chloroplast. The protein operates within protein biosynthesis; polypeptide chain elongation. In terms of biological role, chloroplast-localized elongation factor EF-G involved in protein synthesis in plastids. Catalyzes the GTP-dependent ribosomal translocation step during translation elongation. During this step, the ribosome changes from the pre-translocational (PRE) to the post-translocational (POST) state as the newly formed A-site-bound peptidyl-tRNA and P-site-bound deacylated tRNA move to the P and E sites, respectively. Catalyzes the coordinated movement of the two tRNA molecules, the mRNA and conformational changes in the ribosome. In Pisum sativum (Garden pea), this protein is Elongation factor G, chloroplastic (fusA).